A 116-amino-acid polypeptide reads, in one-letter code: Large ribosomal subunit protein bL19 (116 aa).

It belongs to the bacterial ribosomal protein bL19 family.

This protein is located at the 30S-50S ribosomal subunit interface and may play a role in the structure and function of the aminoacyl-tRNA binding site. The protein is Large ribosomal subunit protein bL19 of Histophilus somni (strain 129Pt) (Haemophilus somnus).